The following is a 610-amino-acid chain: Glutamine--fructose-6-phosphate aminotransferase [isomerizing] (610 aa).

Cys-2 (nucleophile; for GATase activity) is an active-site residue. The 217-residue stretch at 2-218 (CGIVGAVAQR…EGDVAEMTRR (217 aa)) folds into the Glutamine amidotransferase type-2 domain. SIS domains follow at residues 286–426 (AAEI…QQQR) and 459–600 (LAED…VDQP). The For Fru-6P isomerization activity role is filled by Lys-605.

In terms of assembly, homodimer.

Its subcellular location is the cytoplasm. It catalyses the reaction D-fructose 6-phosphate + L-glutamine = D-glucosamine 6-phosphate + L-glutamate. Catalyzes the first step in hexosamine metabolism, converting fructose-6P into glucosamine-6P using glutamine as a nitrogen source. This is Glutamine--fructose-6-phosphate aminotransferase [isomerizing] from Vibrio cholerae serotype O1 (strain ATCC 39315 / El Tor Inaba N16961).